The chain runs to 78 residues: MANEVFNSSLFVIGTYLFLGTLYLVFIPLGLYFWMNTRWNYMGKIERLLIYSLVFLFFPGLILFAPFLNLRMNGQGDV.

Transmembrane regions (helical) follow at residues 10-30 (LFVI…IPLG) and 48-68 (LLIY…APFL).

This sequence belongs to the complex I NdhL subunit family. In terms of assembly, NDH-1 can be composed of about 15 different subunits; different subcomplexes with different compositions have been identified which probably have different functions.

It localises to the cellular thylakoid membrane. The catalysed reaction is a plastoquinone + NADH + (n+1) H(+)(in) = a plastoquinol + NAD(+) + n H(+)(out). It catalyses the reaction a plastoquinone + NADPH + (n+1) H(+)(in) = a plastoquinol + NADP(+) + n H(+)(out). In terms of biological role, NDH-1 shuttles electrons from an unknown electron donor, via FMN and iron-sulfur (Fe-S) centers, to quinones in the respiratory and/or the photosynthetic chain. The immediate electron acceptor for the enzyme in this species is believed to be plastoquinone. Couples the redox reaction to proton translocation, and thus conserves the redox energy in a proton gradient. Cyanobacterial NDH-1 also plays a role in inorganic carbon-concentration. The chain is NAD(P)H-quinone oxidoreductase subunit L from Prochlorococcus marinus (strain SARG / CCMP1375 / SS120).